The primary structure comprises 337 residues: Lipoyl synthase (337 aa).

Cysteine 81, cysteine 86, cysteine 92, cysteine 107, cysteine 111, cysteine 114, and serine 323 together coordinate [4Fe-4S] cluster. A Radical SAM core domain is found at 93-312 (FSHGTATFMI…EDYGNALGFS (220 aa)).

Belongs to the radical SAM superfamily. Lipoyl synthase family. [4Fe-4S] cluster is required as a cofactor.

Its subcellular location is the cytoplasm. The catalysed reaction is [[Fe-S] cluster scaffold protein carrying a second [4Fe-4S](2+) cluster] + N(6)-octanoyl-L-lysyl-[protein] + 2 oxidized [2Fe-2S]-[ferredoxin] + 2 S-adenosyl-L-methionine + 4 H(+) = [[Fe-S] cluster scaffold protein] + N(6)-[(R)-dihydrolipoyl]-L-lysyl-[protein] + 4 Fe(3+) + 2 hydrogen sulfide + 2 5'-deoxyadenosine + 2 L-methionine + 2 reduced [2Fe-2S]-[ferredoxin]. It functions in the pathway protein modification; protein lipoylation via endogenous pathway; protein N(6)-(lipoyl)lysine from octanoyl-[acyl-carrier-protein]: step 2/2. Functionally, catalyzes the radical-mediated insertion of two sulfur atoms into the C-6 and C-8 positions of the octanoyl moiety bound to the lipoyl domains of lipoate-dependent enzymes, thereby converting the octanoylated domains into lipoylated derivatives. This is Lipoyl synthase from Xanthomonas axonopodis pv. citri (strain 306).